We begin with the raw amino-acid sequence, 72 residues long: Rubredoxin (72 aa).

One can recognise a Rubredoxin-like domain in the interval 19–72; the sequence is DAVLECKICWQRYDPAEGDPVWQIPPGTPFAALPAHWRCPRCDGDREQFMVVDG. 4 residues coordinate Fe cation: C24, C27, C57, and C60.

Belongs to the rubredoxin family. Fe(3+) serves as cofactor.

Rubredoxin is a small nonheme, iron protein lacking acid-labile sulfide. Its single Fe, chelated to 4 Cys, functions as an electron acceptor and may also stabilize the conformation of the molecule. Could be involved in hydrogenase-linked redox processes. This is Rubredoxin (hoxR) from Azotobacter vinelandii.